The following is a 658-amino-acid chain: MRGELNIPALSRFGKSISASLHHQNGSSRDDNDSNPYENRSSNSGLNRRNSVFGLPSSGLSSRLSKPSLSSINNSNNSSSNTGGNVLPNPALTPVRNMSNKPPLTWSPSSANLFGTSKVTSIIGNNVSDVVPPVIKKALASSHGGGMSLSIVLLEPVLYLAGFDLNECQIENPALLRGALVLRVAKPANIRGISLSFTGRSRTEWPEGIPVKGHDTYEDKVIISHNWKFYEPTMKDADAPQHGADVARLVGEQLPLPSSAAASLRGYSVFAPGEYTYNFDLAIPNCFPESVEAKMGWVRYFLEATVERFGTFKSNLNGRTPVQLVRTPSPASLSSSELINISRDWDERLHYELQVSGKSFRLGEVVPITFRFLLLDKVRLYKLSISVVESSEYWCRSRKFHRVDPKRRVLLAERSAKHQNTDNLFETPDEGDGLSSAVFNFNVALPTCLVKERDRLTFDTTYKYIKVRHRLKALLVLSIENTENPEKRKYFEINIETPVRILSCRCVKDSTLLPPYESSSQGDNQVLLPCPCRLATTHVEPTEVTAFTTQSVLASSAPSAGRPAAAQISRPAQLFRIPSTNPPPFDGDVCPPACNTPPPNYDELFDVLSSISIQDCETDRANDDTILNNRVRRSGTIREEAPHRSLSRTVSRSFEIPR.

2 disordered regions span residues 21-107 and 638-658; these read LHHQ…LTWS and REEA…EIPR. The segment covering 39 to 81 has biased composition (low complexity); it reads NRSSNSGLNRRNSVFGLPSSGLSSRLSKPSLSSINNSNNSSSN. Residues 96-107 show a composition bias toward polar residues; the sequence is RNMSNKPPLTWS. S653 bears the Phosphoserine mark.

Belongs to the ALY1 family.

The protein localises to the cytoplasm. Functionally, may regulate endocytosis in response to extracellular stimuli. This is Putative arrestin-related trafficking adapter C2D10.04 from Schizosaccharomyces pombe (strain 972 / ATCC 24843) (Fission yeast).